Reading from the N-terminus, the 323-residue chain is Aldo-keto reductase family 1 member C4 (323 aa).

Residues 20 to 24 and aspartate 50 contribute to the NADP(+) site; that span reads GFGTY. Tyrosine 55 acts as the Proton donor in catalysis. Histidine 117 is a binding site for substrate. NADP(+)-binding positions include 166-167, glutamine 190, 216-221, and 270-280; these read SN, HSALGT, and KSYNEQRIREN.

Belongs to the aldo/keto reductase family. As to quaternary structure, monomer. Post-translationally, the N-terminus is blocked. Liver specific.

The protein localises to the cytoplasm. The protein resides in the cytosol. It carries out the reaction a 3alpha-hydroxysteroid + NADP(+) = a 3-oxosteroid + NADPH + H(+). The enzyme catalyses a 3alpha-hydroxysteroid + NAD(+) = a 3-oxosteroid + NADH + H(+). It catalyses the reaction 5alpha-androstane-3alpha,17beta-diol + NADP(+) = 17beta-hydroxy-5alpha-androstan-3-one + NADPH + H(+). The catalysed reaction is 5alpha-androstane-3beta,17beta-diol + NADP(+) = 17beta-hydroxy-5alpha-androstan-3-one + NADPH + H(+). It carries out the reaction 5alpha-androstane-3alpha,17beta-diol + NAD(+) = 17beta-hydroxy-5alpha-androstan-3-one + NADH + H(+). The enzyme catalyses 17beta-estradiol + NADP(+) = estrone + NADPH + H(+). It catalyses the reaction 17beta-estradiol + NAD(+) = estrone + NADH + H(+). The catalysed reaction is (20S)-hydroxypregn-4-en-3-one + NADP(+) = progesterone + NADPH + H(+). It carries out the reaction (20S)-hydroxypregn-4-en-3-one + NAD(+) = progesterone + NADH + H(+). The enzyme catalyses androsterone + NADP(+) = 5alpha-androstan-3,17-dione + NADPH + H(+). It catalyses the reaction testosterone + NADP(+) = androst-4-ene-3,17-dione + NADPH + H(+). The catalysed reaction is testosterone + NAD(+) = androst-4-ene-3,17-dione + NADH + H(+). It carries out the reaction 3alpha-hydroxy-5alpha-androstane 17-O-(beta-D-glucuronate) + NADP(+) = 5alpha-dihydrotestosterone 17-O-(beta-D-glucuronate) + NADPH + H(+). The enzyme catalyses (3beta,5alpha,17beta)-3-hydroxy-androstan-17-yl sulfate + NADP(+) = 5alpha-dihydrotestosterone sulfate + NADPH + H(+). It catalyses the reaction 5alpha-androstane-3alpha,17beta-diol + NAD(+) = androsterone + NADH + H(+). The catalysed reaction is chlordecone alcohol + NADP(+) = chlordecone + NADPH + H(+). The protein operates within steroid metabolism. Inhibited by nonsteroidal the anti-inflammatory drugs (NSAID) flufenamic. The oxidation reaction is inhibited by low micromolar concentrations of NADPH. Its function is as follows. Cytosolic aldo-keto reductase that catalyzes the NADH and NADPH-dependent reduction of ketosteroids to hydroxysteroids. Liver specific enzyme that acts as an NAD(P)(H)-dependent 3-, 17- and 20-ketosteroid reductase on the steroid nucleus and side chain. Displays the ability to catalyze both oxidation and reduction in vitro, but most probably acts as a reductase in vivo since the oxidase activity measured in vitro is inhibited by physiological concentration of NADPH. Acts preferentially as a 3-alpha-hydroxysteroid dehydrogenase (HSD) with a subsidiary 3-beta-HSD activity. Catalyzes efficiently the transformation of the potent androgen 5-alpha-dihydrotestosterone (5alpha-DHT or 17beta-hydroxy-5alpha-androstan-3-one) into the less active form, 5-alpha-androstan-3-alpha,17-beta-diol (3-alpha-diol). Catalyzes the reduction of estrone into 17beta-estradiol but with low efficiency. Metabolizes a broad spectrum of natural and synthetic therapeutic steroid and plays an important role in metabolism of androgens, estrogens, progestereone and conjugated steroids. Catalyzes the biotransformation of the pesticide chlordecone (kepone) to its corresponding alcohol leading to increased biliary excretion of the pesticide and concomitant reduction of its neurotoxicity since bile is the major excretory route. The chain is Aldo-keto reductase family 1 member C4 (AKR1C4) from Homo sapiens (Human).